The primary structure comprises 514 residues: Type-2 serine--tRNA ligase (514 aa).

Ala313 is a binding site for L-serine. Cys315 contacts Zn(2+). Arg344 contributes to the L-serine binding site. ATP contacts are provided by residues 344–346 (RWE) and 355–356 (RV). 361–363 (RGE) serves as a coordination point for L-serine. Residues Glu363 and Cys470 each coordinate Zn(2+). An ATP-binding site is contributed by Arg477.

Belongs to the class-II aminoacyl-tRNA synthetase family. Type-2 seryl-tRNA synthetase subfamily. Homodimer. Zn(2+) serves as cofactor.

It is found in the cytoplasm. The catalysed reaction is tRNA(Ser) + L-serine + ATP = L-seryl-tRNA(Ser) + AMP + diphosphate + H(+). It catalyses the reaction tRNA(Sec) + L-serine + ATP = L-seryl-tRNA(Sec) + AMP + diphosphate + H(+). It participates in aminoacyl-tRNA biosynthesis; selenocysteinyl-tRNA(Sec) biosynthesis; L-seryl-tRNA(Sec) from L-serine and tRNA(Sec): step 1/1. Catalyzes the attachment of serine to tRNA(Ser). Is also able to aminoacylate tRNA(Sec) with serine, to form the misacylated tRNA L-seryl-tRNA(Sec), which will be further converted into selenocysteinyl-tRNA(Sec). This Methanococcus maripaludis (strain C7 / ATCC BAA-1331) protein is Type-2 serine--tRNA ligase.